An 88-amino-acid polypeptide reads, in one-letter code: uncharacterized protein (88 aa).

Transmembrane regions (helical) follow at residues 3–23, 33–53, and 61–81; these read VFIL…CSVA, VAPG…AFTA, and FIGG…PFFF.

The protein resides in the cell membrane. This is an uncharacterized protein from Bacillus subtilis (strain 168).